Here is a 729-residue protein sequence, read N- to C-terminus: Sodium-dependent neutral amino acid transporter B(0)AT2 (729 aa).

Topologically, residues 1–69 (MPKNSKVVKR…ERPAWNSKLQ (69 aa)) are cytoplasmic. Residues Ser25 and Ser55 each carry the phosphoserine modification. The interval 42–61 (DVQEEKDTDAEDGSEADDER) is disordered. Residues 43–59 (VQEEKDTDAEDGSEADD) are compositionally biased toward acidic residues. A run of 3 helical transmembrane segments spans residues 70–90 (YILA…FPYL), 98–117 (AYLL…LFFL), and 142–162 (GIGF…NVII). The Extracellular portion of the chain corresponds to 163-225 (GWTLFYFSQS…SSISDSGGLN (63 aa)). Asn187 carries an N-linked (GlcNAc...) asparagine glycan. 2 consecutive transmembrane segments (helical) span residues 226–244 (WKMT…LAMI) and 253–270 (IMYF…CFLI). Residue Asn276 is glycosylated (N-linked (GlcNAc...) asparagine). 2 consecutive transmembrane segments (helical) span residues 306 to 323 (VFFA…FSSY) and 335 to 356 (VLVS…FAVL). Residues 357-452 (GFKANIVNEK…FIAFTEAMTH (96 aa)) lie on the Extracellular side of the membrane. N-linked (GlcNAc...) asparagine glycans are attached at residues Asn383 and Asn394. 5 helical membrane passes run 453 to 472 (FPAS…NLGL), 496 to 514 (ILTV…IFVQ), 530 to 550 (TLPL…VYGI), 571 to 592 (YMWK…IVNM), and 620 to 642 (VVCF…IRRC). The Cytoplasmic portion of the chain corresponds to 643–729 (NLIDDSSGNL…DMPDMPESDL (87 aa)). A phosphoserine mark is found at Ser687, Ser699, and Ser701.

The protein belongs to the sodium:neurotransmitter symporter (SNF) (TC 2.A.22) family. SLC6A15 subfamily. Significant expressed in brain, lung and kidney. In brain, mainly expressed int the cortex, the cerebellum and the brain stem.

It localises to the membrane. It carries out the reaction L-pipecolate(in) + Na(+)(in) = L-pipecolate(out) + Na(+)(out). The enzyme catalyses L-leucine(in) + Na(+)(in) = L-leucine(out) + Na(+)(out). It catalyses the reaction L-isoleucine(in) + Na(+)(in) = L-isoleucine(out) + Na(+)(out). The catalysed reaction is L-methionine(in) + Na(+)(in) = L-methionine(out) + Na(+)(out). It carries out the reaction L-proline(in) + Na(+)(in) = L-proline(out) + Na(+)(out). The enzyme catalyses L-alanine(in) + Na(+)(in) = L-alanine(out) + Na(+)(out). It catalyses the reaction L-asparagine(in) + Na(+)(in) = L-asparagine(out) + Na(+)(out). The catalysed reaction is L-valine(in) + Na(+)(in) = L-valine(out) + Na(+)(out). It carries out the reaction L-cysteine(in) + Na(+)(in) = L-cysteine(out) + Na(+)(out). The enzyme catalyses L-glutamine(in) + Na(+)(in) = L-glutamine(out) + Na(+)(out). It catalyses the reaction L-serine(in) + Na(+)(in) = L-serine(out) + Na(+)(out). The catalysed reaction is L-threonine(in) + Na(+)(in) = L-threonine(out) + Na(+)(out). It carries out the reaction L-phenylalanine(in) + Na(+)(in) = L-phenylalanine(out) + Na(+)(out). In terms of biological role, functions as a sodium-dependent neutral amino acid transporter. Exhibits preference for methionine and for the branched-chain amino acids, particularly leucine, valine and isoleucine. Can also transport low-affinity substrates such as alanine, phenylalanine, glutamine and pipecolic acid. Mediates the saturable, pH-sensitive and electrogenic cotransport of proline and sodium ions with a stoichiometry of 1:1. May have a role as transporter for neurotransmitter precursors into neurons. In contrast to other members of the neurotransmitter transporter family, does not appear to be chloride-dependent. In Mus musculus (Mouse), this protein is Sodium-dependent neutral amino acid transporter B(0)AT2 (Slc6a15).